Reading from the N-terminus, the 436-residue chain is Glutamyl-tRNA reductase (436 aa).

Substrate-binding positions include 49 to 52 (TCNR), serine 118, 123 to 125 (EPQ), and glutamine 129. Cysteine 50 acts as the Nucleophile in catalysis. 203 to 208 (GAGETI) is a binding site for NADP(+).

This sequence belongs to the glutamyl-tRNA reductase family. Homodimer.

The enzyme catalyses (S)-4-amino-5-oxopentanoate + tRNA(Glu) + NADP(+) = L-glutamyl-tRNA(Glu) + NADPH + H(+). It functions in the pathway porphyrin-containing compound metabolism; protoporphyrin-IX biosynthesis; 5-aminolevulinate from L-glutamyl-tRNA(Glu): step 1/2. Its function is as follows. Catalyzes the NADPH-dependent reduction of glutamyl-tRNA(Glu) to glutamate 1-semialdehyde (GSA). This is Glutamyl-tRNA reductase from Actinobacillus pleuropneumoniae serotype 7 (strain AP76).